Reading from the N-terminus, the 277-residue chain is Urease accessory protein UreD (277 aa).

It belongs to the UreD family. As to quaternary structure, ureD, UreF and UreG form a complex that acts as a GTP-hydrolysis-dependent molecular chaperone, activating the urease apoprotein by helping to assemble the nickel containing metallocenter of UreC. The UreE protein probably delivers the nickel.

The protein localises to the cytoplasm. In terms of biological role, required for maturation of urease via the functional incorporation of the urease nickel metallocenter. The chain is Urease accessory protein UreD from Pseudomonas putida (strain GB-1).